A 64-amino-acid chain; its full sequence is Disintegrin VB7A (64 aa).

The region spanning N1–D64 is the Disintegrin domain. 4 disulfide bridges follow: C6–C29, C20–C26, C25–C50, and C38–C57. The short motif at R42 to D44 is the Cell attachment site element.

It belongs to the disintegrin family. Dimeric disintegrin subfamily. Heterodimer with VB7B; disulfide-linked. In terms of tissue distribution, expressed by the venom gland.

It is found in the secreted. In terms of biological role, poor inhibitor of platelet aggregation. The disintegrin inhibits the adhesion of cells expressing the RGD-dependent integrin alpha-5/beta-1 (ITGA5/ITGB1) to immobilized fibronectin. Inhibition on alpha-2b/beta-3 (ITGA2B/ITGB3) is low. The chain is Disintegrin VB7A from Vipera berus berus (Common viper).